The primary structure comprises 677 residues: Threonine--tRNA ligase (677 aa).

The TGS domain maps to 1–59 (MAQATISITVNGEAKEVEATTTGVELFAEDKNIIAVKINGENRDLYTPLNDGDTVDPIA). Positions 255 to 561 (DHRKLGAEMD…LLEHYAGAFP (307 aa)) are catalytic. Zn(2+) is bound by residues Cys-360, His-411, and His-538.

It belongs to the class-II aminoacyl-tRNA synthetase family. In terms of assembly, homodimer. Requires Zn(2+) as cofactor.

The protein localises to the cytoplasm. The enzyme catalyses tRNA(Thr) + L-threonine + ATP = L-threonyl-tRNA(Thr) + AMP + diphosphate + H(+). Its function is as follows. Catalyzes the attachment of threonine to tRNA(Thr) in a two-step reaction: L-threonine is first activated by ATP to form Thr-AMP and then transferred to the acceptor end of tRNA(Thr). Also edits incorrectly charged L-seryl-tRNA(Thr). The protein is Threonine--tRNA ligase of Bifidobacterium longum (strain NCC 2705).